The chain runs to 588 residues: UvrABC system protein C (588 aa).

The GIY-YIG domain occupies 12-89 (SKPGCYLYLN…IKKYRPKYNV (78 aa)). In terms of domain architecture, UVR spans 194-229 (NEVKTLLTNQMHKAAENLQFEEAQRIKEQIISLDFT).

It belongs to the UvrC family. In terms of assembly, interacts with UvrB in an incision complex.

It localises to the cytoplasm. The UvrABC repair system catalyzes the recognition and processing of DNA lesions. UvrC both incises the 5' and 3' sides of the lesion. The N-terminal half is responsible for the 3' incision and the C-terminal half is responsible for the 5' incision. The sequence is that of UvrABC system protein C from Mesoplasma florum (strain ATCC 33453 / NBRC 100688 / NCTC 11704 / L1) (Acholeplasma florum).